The chain runs to 305 residues: D-alanine--D-alanine ligase (305 aa).

The 202-residue stretch at 99-300 folds into the ATP-grasp domain; sequence KLFFEKAGIR…YEEMIQTFVN (202 aa). ATP is bound at residue 126–181; the sequence is NFTGTYPVVVKPNQEGSTIGLTVAETEEELLQGIEEAFRHDDTILIEEFIAGTEVT.

This sequence belongs to the D-alanine--D-alanine ligase family.

It is found in the cytoplasm. The catalysed reaction is 2 D-alanine + ATP = D-alanyl-D-alanine + ADP + phosphate + H(+). The protein operates within cell wall biogenesis; peptidoglycan biosynthesis. Cell wall formation. The polypeptide is D-alanine--D-alanine ligase (Halalkalibacterium halodurans (strain ATCC BAA-125 / DSM 18197 / FERM 7344 / JCM 9153 / C-125) (Bacillus halodurans)).